Consider the following 474-residue polypeptide: Homocitrate synthase, mitochondrial (474 aa).

Residues 67–320 enclose the Pyruvate carboxyltransferase domain; that stretch reads FQIIESTLRE…KSKYKLEKLK (254 aa). A 2-oxoglutarate-binding site is contributed by R75. Mg(2+) is bound at residue E76. Residues H135, R195, and T229 each contribute to the 2-oxoglutarate site. Mg(2+) contacts are provided by H256 and H258. The active-site Proton acceptor is the H353.

It belongs to the alpha-IPM synthase/homocitrate synthase family. Homocitrate synthase LYS20/LYS21 subfamily. Mg(2+) is required as a cofactor. Mn(2+) serves as cofactor.

The protein localises to the mitochondrion. The catalysed reaction is acetyl-CoA + 2-oxoglutarate + H2O = (2R)-homocitrate + CoA + H(+). It functions in the pathway amino-acid biosynthesis; L-lysine biosynthesis via AAA pathway; L-alpha-aminoadipate from 2-oxoglutarate: step 1/5. Catalyzes the aldol-type condensation of 2-oxoglutarate with acetyl-CoA to yield homocitrate. Carries out the first step of the alpha-aminoadipate (AAA) lysine biosynthesis pathway. This chain is Homocitrate synthase, mitochondrial (lys1), found in Penicillium rubens (strain ATCC 28089 / DSM 1075 / NRRL 1951 / Wisconsin 54-1255) (Penicillium chrysogenum).